A 510-amino-acid chain; its full sequence is NAD(P)H-quinone oxidoreductase subunit 2 B, chloroplastic (510 aa).

Helical transmembrane passes span 24–44 (LLLFDGSFIFPECILIFGLIL), 57–77 (IPWLYFISSTSLVMSITALLF), 99–119 (IFQFLILLCSTLCIPLSVEYI), 124–144 (MAITEFLLFVLTATLGGMFLC), 149–169 (LITIFVAPECFSLCSYLLSGY), 183–203 (YLLMGGASSSILVHGFSWLYG), 227–247 (PGISIALIFITVGIGFKLSLA), 295–315 (WHLLLEILAILSMILGNLIAI), 323–343 (MLAYSSIGQIGYVIIGIIVGD), 354–374 (YMLFYISMNLGTFACIVLFGL), 395–415 (ALSLALCLLSLGGLPPLAGFF), 418–438 (LHLFWCGWQAGLYFLVSIGLL), and 484–504 (MIVCVIASTILGISMNPIIAI).

This sequence belongs to the complex I subunit 2 family. In terms of assembly, NDH is composed of at least 16 different subunits, 5 of which are encoded in the nucleus.

It is found in the plastid. The protein localises to the chloroplast thylakoid membrane. It catalyses the reaction a plastoquinone + NADH + (n+1) H(+)(in) = a plastoquinol + NAD(+) + n H(+)(out). The enzyme catalyses a plastoquinone + NADPH + (n+1) H(+)(in) = a plastoquinol + NADP(+) + n H(+)(out). Its function is as follows. NDH shuttles electrons from NAD(P)H:plastoquinone, via FMN and iron-sulfur (Fe-S) centers, to quinones in the photosynthetic chain and possibly in a chloroplast respiratory chain. The immediate electron acceptor for the enzyme in this species is believed to be plastoquinone. Couples the redox reaction to proton translocation, and thus conserves the redox energy in a proton gradient. This Citrus sinensis (Sweet orange) protein is NAD(P)H-quinone oxidoreductase subunit 2 B, chloroplastic.